The following is a 197-amino-acid chain: Phospholipid hydroperoxide glutathione peroxidase (197 aa).

Ser-40 carries the phosphoserine modification. Sec-73 is an active-site residue. A non-standard amino acid (selenocysteine) is located at residue Sec-73.

Belongs to the glutathione peroxidase family. In terms of assembly, monomer. Has a tendency to form higher mass oligomers. Interacts with FUNDC1; this interaction promotes GPX4 recruitment into mitochondria through TOM/TIM complex where it is degraded by mitophagy.

Its subcellular location is the mitochondrion. The protein localises to the cytoplasm. The catalysed reaction is a hydroperoxy polyunsaturated fatty acid + 2 glutathione = a hydroxy polyunsaturated fatty acid + glutathione disulfide + H2O. The enzyme catalyses 2 glutathione + H2O2 = glutathione disulfide + 2 H2O. It catalyses the reaction tert-butyl hydroperoxide + 2 glutathione = tert-butanol + glutathione disulfide + H2O. It carries out the reaction cumene hydroperoxide + 2 glutathione = 2-phenylpropan-2-ol + glutathione disulfide + H2O. The catalysed reaction is (9S)-hydroperoxy-(10E,12Z)-octadecadienoate + 2 glutathione = (9S)-hydroxy-(10E,12Z)-octadecadienoate + glutathione disulfide + H2O. The enzyme catalyses (13S)-hydroperoxy-(9Z,11E)-octadecadienoate + 2 glutathione = (13S)-hydroxy-(9Z,11E)-octadecadienoate + glutathione disulfide + H2O. It catalyses the reaction (5S)-hydroperoxy-(6E,8Z,11Z,14Z)-eicosatetraenoate + 2 glutathione = (5S)-hydroxy-(6E,8Z,11Z,14Z)-eicosatetraenoate + glutathione disulfide + H2O. It carries out the reaction (12R)-hydroperoxy-(5Z,8Z,10E,14Z)-eicosatetraenoate + 2 glutathione = (12R)-hydroxy-(5Z,8Z,10E,14Z)-eicosatetraenoate + glutathione disulfide + H2O. The catalysed reaction is (12S)-hydroperoxy-(5Z,8Z,10E,14Z)-eicosatetraenoate + 2 glutathione = (12S)-hydroxy-(5Z,8Z,10E,14Z)-eicosatetraenoate + glutathione disulfide + H2O. The enzyme catalyses (15S)-hydroperoxy-(5Z,8Z,11Z,13E)-eicosatetraenoate + 2 glutathione = (15S)-hydroxy-(5Z,8Z,11Z,13E)-eicosatetraenoate + glutathione disulfide + H2O. It catalyses the reaction (5S)-hydroperoxy-(6E,8Z,11Z,14Z,17Z)-eicosapentaenoate + 2 glutathione = (5S)-hydroxy-(6E,8Z,11Z,14Z,17Z)-eicosapentaenoate + glutathione disulfide + H2O. It carries out the reaction (12S)-hydroperoxy-(5Z,8Z,10E,14Z,17Z)-eicosapentaenoate + 2 glutathione = (12S)-hydroxy-(5Z,8Z,10E,14Z,17Z)-eicosapentaenoate + glutathione disulfide + H2O. The catalysed reaction is (15S)-hydroperoxy-(5Z,8Z,11Z,13E,17Z)-eicosapentaenoate + 2 glutathione = (15S)-hydroxy-(5Z,8Z,11Z,13E,17Z)-eicosapentaenoate + glutathione disulfide + H2O. The enzyme catalyses (15S)-hydroperoxy-(11Z,13E)-eicosadienoate + 2 glutathione = (15S)-hydroxy-(11Z,13E)-eicosadienoate + glutathione disulfide + H2O. It catalyses the reaction (17S)-hydroperoxy-(4Z,7Z,10Z,13Z,15E,19Z)-docosahexaenoate + 2 glutathione = (17S)-hydroxy-(4Z,7Z,10Z,13Z,15E,19Z)-docosahexaenoate + glutathione disulfide + H2O. It carries out the reaction a hydroperoxy-1,2-diacyl-glycero-3-phosphocholine + 2 glutathione = a hydroxy-1,2-diacyl-glycero-3-phosphocholine + glutathione disulfide + H2O. In terms of biological role, essential antioxidant peroxidase that directly reduces phospholipid hydroperoxide even if they are incorporated in membranes and lipoproteins. Can also reduce fatty acid hydroperoxide, cholesterol hydroperoxide and thymine hydroperoxide. Plays a key role in protecting cells from oxidative damage by preventing membrane lipid peroxidation. Required to prevent cells from ferroptosis, a non-apoptotic cell death resulting from an iron-dependent accumulation of lipid reactive oxygen species. The presence of selenocysteine (Sec) versus Cys at the active site is essential for life: it provides resistance to overoxidation and prevents cells against ferroptosis. The presence of Sec at the active site is also essential for the survival of a specific type of parvalbumin-positive interneurons, thereby preventing against fatal epileptic seizures. May be required to protect cells from the toxicity of ingested lipid hydroperoxides. Required for normal sperm development and male fertility. Essential for maturation and survival of photoreceptor cells. Plays a role in a primary T-cell response to viral and parasitic infection by protecting T-cells from ferroptosis and by supporting T-cell expansion. Plays a role of glutathione peroxidase in platelets in the arachidonic acid metabolism. Reduces hydroperoxy ester lipids formed by a 15-lipoxygenase that may play a role as down-regulator of the cellular 15-lipoxygenase pathway. Can also reduce small soluble hydroperoxides such as H2O2, cumene hydroperoxide and tert-butyl hydroperoxide. The protein is Phospholipid hydroperoxide glutathione peroxidase of Hylobates lar (Lar gibbon).